Here is a 209-residue protein sequence, read N- to C-terminus: Phosphoheptose isomerase (209 aa).

An SIS domain is found at 50-209 (IAETFRNGGK…ELVESMMGYA (160 aa)). Substrate is bound at residue 65-67 (NGG). Zn(2+) contacts are provided by histidine 74 and glutamate 78. Substrate-binding positions include glutamate 78, 109–110 (ND), 135–137 (STS), serine 140, and glutamine 188. Positions 188 and 196 each coordinate Zn(2+).

Belongs to the SIS family. GmhA subfamily. Requires Zn(2+) as cofactor.

It localises to the cytoplasm. The catalysed reaction is 2 D-sedoheptulose 7-phosphate = D-glycero-alpha-D-manno-heptose 7-phosphate + D-glycero-beta-D-manno-heptose 7-phosphate. Its pathway is carbohydrate biosynthesis; D-glycero-D-manno-heptose 7-phosphate biosynthesis; D-glycero-alpha-D-manno-heptose 7-phosphate and D-glycero-beta-D-manno-heptose 7-phosphate from sedoheptulose 7-phosphate: step 1/1. In terms of biological role, catalyzes the isomerization of sedoheptulose 7-phosphate in D-glycero-D-manno-heptose 7-phosphate. This is Phosphoheptose isomerase from Chlorobaculum parvum (strain DSM 263 / NCIMB 8327) (Chlorobium vibrioforme subsp. thiosulfatophilum).